The following is a 103-amino-acid chain: MASNKLRIYLKAYDHTLLDESAKRIAESAKKSGAIVAGPMPLPTKIRKYTVLRSVHVNKDSREQFEMRVHRRMIELVNSTDKAISSLTSVHLPAGVGIEIKQV.

Belongs to the universal ribosomal protein uS10 family. Part of the 30S ribosomal subunit.

Involved in the binding of tRNA to the ribosomes. In Fusobacterium nucleatum subsp. nucleatum (strain ATCC 25586 / DSM 15643 / BCRC 10681 / CIP 101130 / JCM 8532 / KCTC 2640 / LMG 13131 / VPI 4355), this protein is Small ribosomal subunit protein uS10.